A 127-amino-acid chain; its full sequence is UPF0716 protein YtzA (127 aa).

The next 4 membrane-spanning stretches (helical) occupy residues 3–22, 26–46, 70–90, and 93–115; these read FLFL…FLFL, IGIL…AAAA, AIAD…PGFL, and LAGA…FKWL.

Belongs to the UPF0716 (FxsA) family.

It is found in the cell membrane. The polypeptide is UPF0716 protein YtzA (ytzA) (Bacillus subtilis (strain 168)).